The chain runs to 256 residues: H-2 class II histocompatibility antigen, A-D alpha chain (256 aa).

The signal sequence occupies residues 1-23; sequence MPCSRALILGVLALNTMLSLCGG. The tract at residues 24 to 111 is alpha-1; the sequence is EDDIEADHVG…KRSNFTPATN (88 aa). Residues 24–218 lie on the Extracellular side of the membrane; the sequence is EDDIEADHVG…IPAPMSELTE (195 aa). The tract at residues 112 to 205 is alpha-2; it reads EAPQATVFPK…GLEEPVLKHW (94 aa). The region spanning 114–206 is the Ig-like C1-type domain; that stretch reads PQATVFPKSP…LEEPVLKHWE (93 aa). Residues Cys-134 and Cys-190 are joined by a disulfide bond. A glycan (N-linked (GlcNAc...) asparagine) is linked at Asn-145. The interval 206–218 is connecting peptide; it reads EPEIPAPMSELTE. The chain crosses the membrane as a helical span at residues 219 to 244; it reads TVVCALGLSVGLVGIVVGTIFIIQGL. At 245-256 the chain is on the cytoplasmic side; it reads RSGGTSRHPGPL.

It belongs to the MHC class II family.

It is found in the membrane. In Mus musculus (Mouse), this protein is H-2 class II histocompatibility antigen, A-D alpha chain (H2-Aa).